A 122-amino-acid polypeptide reads, in one-letter code: UPF0102 protein BARBAKC583_1042 (122 aa).

The protein belongs to the UPF0102 family.

The polypeptide is UPF0102 protein BARBAKC583_1042 (Bartonella bacilliformis (strain ATCC 35685 / KC583 / Herrer 020/F12,63)).